Consider the following 115-residue polypeptide: NADH-ubiquinone oxidoreductase chain 3 (115 aa).

Transmembrane regions (helical) follow at residues 1–21 (MITL…LLII), 55–75 (FFLV…LFPL), and 87–107 (AIIL…YEWL).

This sequence belongs to the complex I subunit 3 family.

The protein resides in the mitochondrion membrane. The enzyme catalyses a ubiquinone + NADH + 5 H(+)(in) = a ubiquinol + NAD(+) + 4 H(+)(out). Core subunit of the mitochondrial membrane respiratory chain NADH dehydrogenase (Complex I) that is believed to belong to the minimal assembly required for catalysis. Complex I functions in the transfer of electrons from NADH to the respiratory chain. The immediate electron acceptor for the enzyme is believed to be ubiquinone. In Myxine glutinosa (Atlantic hagfish), this protein is NADH-ubiquinone oxidoreductase chain 3 (MT-ND3).